A 465-amino-acid chain; its full sequence is Iron-sulfur cluster assembly SufBD family protein SAUSA300_0822 (465 aa).

It belongs to the iron-sulfur cluster assembly SufBD family.

In Staphylococcus aureus (strain USA300), this protein is Iron-sulfur cluster assembly SufBD family protein SAUSA300_0822.